A 391-amino-acid polypeptide reads, in one-letter code: NADH-quinone oxidoreductase subunit D (391 aa).

Belongs to the complex I 49 kDa subunit family. NDH-1 is composed of 14 different subunits. Subunits NuoB, C, D, E, F, and G constitute the peripheral sector of the complex.

It is found in the cell inner membrane. The catalysed reaction is a quinone + NADH + 5 H(+)(in) = a quinol + NAD(+) + 4 H(+)(out). In terms of biological role, NDH-1 shuttles electrons from NADH, via FMN and iron-sulfur (Fe-S) centers, to quinones in the respiratory chain. The immediate electron acceptor for the enzyme in this species is believed to be ubiquinone. Couples the redox reaction to proton translocation (for every two electrons transferred, four hydrogen ions are translocated across the cytoplasmic membrane), and thus conserves the redox energy in a proton gradient. This is NADH-quinone oxidoreductase subunit D from Rickettsia felis (strain ATCC VR-1525 / URRWXCal2) (Rickettsia azadi).